Here is a 341-residue protein sequence, read N- to C-terminus: Ribosomal RNA small subunit methyltransferase H (341 aa).

Residues 47–49 (GGY), Asp-64, Phe-91, Asp-109, and Gln-116 each bind S-adenosyl-L-methionine.

This sequence belongs to the methyltransferase superfamily. RsmH family.

Its subcellular location is the cytoplasm. The enzyme catalyses cytidine(1402) in 16S rRNA + S-adenosyl-L-methionine = N(4)-methylcytidine(1402) in 16S rRNA + S-adenosyl-L-homocysteine + H(+). Functionally, specifically methylates the N4 position of cytidine in position 1402 (C1402) of 16S rRNA. The protein is Ribosomal RNA small subunit methyltransferase H of Sinorhizobium medicae (strain WSM419) (Ensifer medicae).